The sequence spans 230 residues: Complex I assembly factor TMEM126B, mitochondrial (230 aa).

A run of 4 helical transmembrane segments spans residues 70–92 (LNIH…ANLV), 107–126 (YASL…KLFV), 139–161 (SCVL…ALAF), and 196–218 (AMAI…HYNI).

It belongs to the TMEM126 family. In terms of assembly, part of the mitochondrial complex I assembly/MCIA complex that comprises at least the core subunits TMEM126B, NDUFAF1, ECSIT and ACAD9 and complement subunits such as COA1 and TMEM186. Associates with the intermediate 370 kDa subcomplex of incompletely assembled complex I. Interacts with TMEM70.

The protein resides in the mitochondrion membrane. Its function is as follows. As part of the MCIA complex, involved in the assembly of the mitochondrial complex I. Participates in constructing the membrane arm of complex I. In Mus musculus (Mouse), this protein is Complex I assembly factor TMEM126B, mitochondrial.